We begin with the raw amino-acid sequence, 516 residues long: Putative F-box and FNIP repeat-containing protein L414 (516 aa).

The F-box domain occupies 4–49 (INDLNMDVILHLLTFLTDKNKLNFMMTCTHLYQFISCVKYNNFQLF). FNIP repeat units follow at residues 123–165 (FNHT…FGEN), 166–208 (FNKM…LMYS), 341–383 (YNPK…NFNG), 385–428 (YDNI…FGKL), and 429–470 (YNKP…FGYM).

The protein is Putative F-box and FNIP repeat-containing protein L414 of Acanthamoeba polyphaga (Amoeba).